The sequence spans 397 residues: Ubiquitin-like modifier-activating enzyme 5 (397 aa).

Residues Gly-76, Asp-97, Lys-120, Asn-143, and Asn-177 each contribute to the ATP site. Zn(2+) contacts are provided by Cys-219 and Cys-222. Cys-243 acts as the Glycyl thioester intermediate in catalysis. Zn(2+) is bound by residues Cys-296 and Cys-301. Residues 362–384 form a disordered region; the sequence is LAYEPPASTKHSETTSTTAVSDD. Residues 375 to 384 show a composition bias toward low complexity; that stretch reads TTSTTAVSDD.

It belongs to the ubiquitin-activating E1 family. UBA5 subfamily.

Its function is as follows. E1-like enzyme which activates UFM1. The polypeptide is Ubiquitin-like modifier-activating enzyme 5 (Aedes aegypti (Yellowfever mosquito)).